Consider the following 170-residue polypeptide: Bifunctional protein PyrR (170 aa).

Positions 90–102 match the PRPP-binding motif; sequence LVLIDDVLMSGRT.

It belongs to the purine/pyrimidine phosphoribosyltransferase family. PyrR subfamily.

The enzyme catalyses UMP + diphosphate = 5-phospho-alpha-D-ribose 1-diphosphate + uracil. In terms of biological role, regulates the transcription of the pyrimidine nucleotide (pyr) operon in response to exogenous pyrimidines. Functionally, also displays a weak uracil phosphoribosyltransferase activity which is not physiologically significant. The sequence is that of Bifunctional protein PyrR from Pseudomonas syringae pv. syringae (strain B728a).